A 200-amino-acid chain; its full sequence is ATP-dependent Clp protease proteolytic subunit 2 (200 aa).

The Nucleophile role is filled by Ser-101. Residue His-126 is part of the active site.

The protein belongs to the peptidase S14 family. In terms of assembly, fourteen ClpP subunits assemble into 2 heptameric rings which stack back to back to give a disk-like structure with a central cavity, resembling the structure of eukaryotic proteasomes.

The protein resides in the cytoplasm. It catalyses the reaction Hydrolysis of proteins to small peptides in the presence of ATP and magnesium. alpha-casein is the usual test substrate. In the absence of ATP, only oligopeptides shorter than five residues are hydrolyzed (such as succinyl-Leu-Tyr-|-NHMec, and Leu-Tyr-Leu-|-Tyr-Trp, in which cleavage of the -Tyr-|-Leu- and -Tyr-|-Trp bonds also occurs).. Its function is as follows. Cleaves peptides in various proteins in a process that requires ATP hydrolysis. Has a chymotrypsin-like activity. Plays a major role in the degradation of misfolded proteins. The sequence is that of ATP-dependent Clp protease proteolytic subunit 2 from Prochlorococcus marinus (strain NATL2A).